Reading from the N-terminus, the 245-residue chain is Acetylglutamate kinase (245 aa).

Residues 41-42 (GG), R63, and N156 contribute to the substrate site.

It belongs to the acetylglutamate kinase family. ArgB subfamily.

Its subcellular location is the cytoplasm. The enzyme catalyses N-acetyl-L-glutamate + ATP = N-acetyl-L-glutamyl 5-phosphate + ADP. It functions in the pathway amino-acid biosynthesis; L-arginine biosynthesis; N(2)-acetyl-L-ornithine from L-glutamate: step 2/4. Its function is as follows. Catalyzes the ATP-dependent phosphorylation of N-acetyl-L-glutamate. In Staphylococcus epidermidis (strain ATCC 35984 / DSM 28319 / BCRC 17069 / CCUG 31568 / BM 3577 / RP62A), this protein is Acetylglutamate kinase.